The sequence spans 182 residues: ATP-dependent protease subunit HslV (182 aa).

Residue T10 is part of the active site. Na(+) is bound by residues A166, C169, and S172.

Belongs to the peptidase T1B family. HslV subfamily. In terms of assembly, a double ring-shaped homohexamer of HslV is capped on each side by a ring-shaped HslU homohexamer. The assembly of the HslU/HslV complex is dependent on binding of ATP.

The protein resides in the cytoplasm. The enzyme catalyses ATP-dependent cleavage of peptide bonds with broad specificity.. Its activity is regulated as follows. Allosterically activated by HslU binding. Functionally, protease subunit of a proteasome-like degradation complex believed to be a general protein degrading machinery. This is ATP-dependent protease subunit HslV from Rickettsia typhi (strain ATCC VR-144 / Wilmington).